Consider the following 352-residue polypeptide: uncharacterized protein (352 aa).

The transit peptide at 1–55 directs the protein to the chloroplast; it reads MAMAALTSSSSAITLLNKPFLPNRSSFFSSDSQSPLLRFSASTSVRSRFPSAAIS.

It belongs to the methyltransferase superfamily.

The protein localises to the plastid. It is found in the chloroplast. Its subcellular location is the plastoglobule. This is an uncharacterized protein from Arabidopsis thaliana (Mouse-ear cress).